A 220-amino-acid polypeptide reads, in one-letter code: MRIILLGAPGAGKGTQSNYISKSLAIPQISTGDMLRAAVKAGTPLGLKAKEVMDGGNLVSDDIIMDIIKERLLEHDCKEGCLFDGFPRTIAQAESLDRQGIDIDHVIEIHVDDREIIDRMSGRRVHPASGRTYHIRFNPPQTAGMDDETGEPLVQRADDTEETVKKRLEIYHDQTAPLIEYYSRRAAGAGTGAFAPRYTRIEGTGSVEEIRDRILEALRG.

Residue 10–15 coordinates ATP; the sequence is GAGKGT. The NMP stretch occupies residues 30-59; the sequence is STGDMLRAAVKAGTPLGLKAKEVMDGGNLV. AMP is bound by residues Thr-31, Arg-36, 57 to 59, 85 to 88, and Gln-92; these read NLV and GFPR. The interval 122–159 is LID; sequence GRRVHPASGRTYHIRFNPPQTAGMDDETGEPLVQRADD. ATP-binding positions include Arg-123 and 132–133; that span reads TY. Residues Arg-156 and Arg-167 each contribute to the AMP site. Residue Gly-205 participates in ATP binding.

This sequence belongs to the adenylate kinase family. Monomer.

Its subcellular location is the cytoplasm. The catalysed reaction is AMP + ATP = 2 ADP. It functions in the pathway purine metabolism; AMP biosynthesis via salvage pathway; AMP from ADP: step 1/1. In terms of biological role, catalyzes the reversible transfer of the terminal phosphate group between ATP and AMP. Plays an important role in cellular energy homeostasis and in adenine nucleotide metabolism. The chain is Adenylate kinase from Chlorobium luteolum (strain DSM 273 / BCRC 81028 / 2530) (Pelodictyon luteolum).